Consider the following 327-residue polypeptide: Thioredoxin reductase (327 aa).

FAD-binding positions include 10–13 (SGPA), 39–40 (IA), Gln44, Asn53, Val86, Cys143, Asp286, and 293–295 (RQA). A disulfide bridge connects residues Cys140 and Cys143.

It belongs to the class-II pyridine nucleotide-disulfide oxidoreductase family. As to quaternary structure, homodimer. FAD serves as cofactor.

Its subcellular location is the cytoplasm. It catalyses the reaction [thioredoxin]-dithiol + NADP(+) = [thioredoxin]-disulfide + NADPH + H(+). Component of the thioredoxin-thioredoxin reductase system which may be involved in biosynthesis of penicillins and cephalosporins and may be important in determining the thiol-disulfide redox balance. The chain is Thioredoxin reductase (TRR1) from Pneumocystis jirovecii (Human pneumocystis pneumonia agent).